Here is a 478-residue protein sequence, read N- to C-terminus: Secretogranin-3 (478 aa).

The signal sequence occupies residues 1-21 (MASKRLGFVVVLALVCQHINA). Disordered stretches follow at residues 22–126 (FPTP…NGMD) and 208–287 (IGDR…EDGL). Residues 28–42 (PDDKYNRELTEEKPL) show a composition bias toward basic and acidic residues. Positions 63-74 (AEEETNSEDDDI) are enriched in acidic residues. Basic and acidic residues predominate over residues 97 to 120 (ANERLGADDTDSTKNRRLADDYDS). The span at 235 to 259 (DEEDEVENEGGDDANGDEPQEEESR) shows a compositional bias: acidic residues.

Its subcellular location is the cytoplasmic vesicle. The protein localises to the secretory vesicle lumen. It localises to the secretory vesicle membrane. The protein resides in the secreted. This Danio rerio (Zebrafish) protein is Secretogranin-3 (scg3).